A 129-amino-acid chain; its full sequence is Large ribosomal subunit protein uL22 (129 aa).

Belongs to the universal ribosomal protein uL22 family. In terms of assembly, part of the 50S ribosomal subunit.

Its function is as follows. This protein binds specifically to 23S rRNA; its binding is stimulated by other ribosomal proteins, e.g. L4, L17, and L20. It is important during the early stages of 50S assembly. It makes multiple contacts with different domains of the 23S rRNA in the assembled 50S subunit and ribosome. The globular domain of the protein is located near the polypeptide exit tunnel on the outside of the subunit, while an extended beta-hairpin is found that lines the wall of the exit tunnel in the center of the 70S ribosome. The protein is Large ribosomal subunit protein uL22 of Aster yellows witches'-broom phytoplasma (strain AYWB).